A 582-amino-acid chain; its full sequence is Vesicular glutamate transporter 2 (582 aa).

At 1–71 (MESVKQRILT…CTCFGLPRRY (71 aa)) the chain is on the cytoplasmic side. A helical transmembrane segment spans residues 72-92 (IIAIMSGLGFCISFGIRCNLG). Residues 93–125 (VAIVDMVNNSTIHRGGKVIKEKAKFNWDPETVG) lie on the Vesicular side of the membrane. Asparagine 100 and asparagine 101 each carry an N-linked (GlcNAc...) asparagine glycan. Residues 126–146 (MIHGSFFWGYIITQIPGGYIA) form a helical membrane-spanning segment. The Cytoplasmic portion of the chain corresponds to 147–148 (SR). Residues 149–169 (LAANRVFGAAILLTSTLNMLI) form a helical membrane-spanning segment. Topologically, residues 170–177 (PSAARVHY) are vesicular. Residues 178 to 198 (GCVIFVRILQGLVEGVTYPAC) traverse the membrane as a helical segment. Topologically, residues 199-216 (HGIWSKWAPPLERSRLAT) are cytoplasmic. The chain crosses the membrane as a helical span at residues 217–237 (TSFCGSYAGAVIAMPLAGILV). Residues 238-244 (QYTGWSS) are Vesicular-facing. A helical transmembrane segment spans residues 245 to 265 (VFYVYGSFGMIWYMFWLLVSY). Over 266–310 (ESPAKHPTITDEERRYIEESIGESANLLGAMEKFKTPWRKFFTSM) the chain is Cytoplasmic. Residues 311–331 (PVYAIIVANFCRSWTFYLLLI) traverse the membrane as a helical segment. The Vesicular segment spans residues 332–349 (SQPAYFEEVFGFEISKVG). Residues 350-370 (MLSAVPHLVMTIIVPIGGQIA) form a helical membrane-spanning segment. The Cytoplasmic segment spans residues 371–386 (DFLRSKQILSTTTVRK). Residues 387–407 (IMNCGGFGMEATLLLVVGYSH) traverse the membrane as a helical segment. Residues 408-409 (TR) lie on the Vesicular side of the membrane. Residues 410-430 (GVAISFLVLAVGFSGFAISGF) form a helical membrane-spanning segment. Residues 431-443 (NVNHLDIAPRYAS) are Cytoplasmic-facing. The chain crosses the membrane as a helical span at residues 444-464 (ILMGISNGVGTLSGMVCPIIV). Over 465–477 (GAMTKNKSREEWQ) the chain is Vesicular. N-linked (GlcNAc...) asparagine glycosylation occurs at asparagine 470. Residues 478 to 498 (YVFLIAALVHYGGVIFYAIFA) form a helical membrane-spanning segment. Residues 499-582 (SGEKQPWADP…YNYKDRDDYS (84 aa)) are Cytoplasmic-facing.

The protein belongs to the major facilitator superfamily. Sodium/anion cotransporter family. VGLUT subfamily.

It is found in the cytoplasmic vesicle. Its subcellular location is the secretory vesicle. The protein localises to the synaptic vesicle membrane. The protein resides in the synapse. It localises to the synaptosome. It is found in the cell membrane. It carries out the reaction L-glutamate(out) = L-glutamate(in). The catalysed reaction is 3 Na(+)(out) + phosphate(out) = 3 Na(+)(in) + phosphate(in). The enzyme catalyses phosphate(in) = phosphate(out). It catalyses the reaction K(+)(in) + H(+)(out) = K(+)(out) + H(+)(in). It carries out the reaction chloride(in) = chloride(out). With respect to regulation, chloride channel activity is allosterically activated by lumenal H(+) and Cl(-) leading to synaptic vesicles acidification. The L-glutamate transport activity is allosterically activated by lumenal H(+) and Cl(-). The allosteric requirement for H(+) efficiently prevents non-vesicular efflux across the plasma membrane. The L-glutamate uniporter activity exhibits a biphasic dependence on chloride concentration. Functionally, multifunctional transporter that transports L-glutamate as well as multiple ions such as chloride, proton, potassium, sodium and phosphate. At the synaptic vesicle membrane, mainly functions as a uniporter which transports preferentially L-glutamate but also, phosphate from the cytoplasm into synaptic vesicles at presynaptic nerve terminals of excitatory neural cells. The L-glutamate or phosphate uniporter activity is electrogenic and is driven by the proton electrochemical gradient, mainly by the electrical gradient established by the vacuolar H(+)-ATPase across the synaptic vesicle membrane. In addition, functions as a chloride channel that allows a chloride permeation through the synaptic vesicle membrane therefore affects the proton electrochemical gradient and promotes synaptic vesicles acidification. Moreover, functions as a vesicular K(+)/H(+) antiport allowing to maintain the electrical gradient and to decrease chemical gradient and therefore sustain vesicular L-glutamate uptake. The vesicular H(+)/H(+) antiport activity is electroneutral. At the plasma membrane, following exocytosis, functions as a symporter of Na(+) and phosphate from the extracellular space to the cytoplasm allowing synaptic phosphate homeostasis regulation. The symporter activity is driven by an inside negative membrane potential and is electrogenic. Also involved in the regulation of retinal hyaloid vessel regression during postnatal development. May also play a role in the endocrine L-glutamatergic system of other tissues such as pineal gland and pancreas. In Bos taurus (Bovine), this protein is Vesicular glutamate transporter 2.